The chain runs to 83 residues: Translational regulator CsrA (83 aa).

This sequence belongs to the CsrA/RsmA family. As to quaternary structure, homodimer; the beta-strands of each monomer intercalate to form a hydrophobic core, while the alpha-helices form wings that extend away from the core.

The protein localises to the cytoplasm. A translational regulator that binds mRNA to regulate translation initiation and/or mRNA stability. Usually binds in the 5'-UTR at or near the Shine-Dalgarno sequence preventing ribosome-binding, thus repressing translation. Its main target seems to be the major flagellin gene, while its function is anatagonized by FliW. The chain is Translational regulator CsrA from Thermotoga maritima (strain ATCC 43589 / DSM 3109 / JCM 10099 / NBRC 100826 / MSB8).